We begin with the raw amino-acid sequence, 232 residues long: Uracil-DNA glycosylase (232 aa).

The Proton acceptor role is filled by D66.

This sequence belongs to the uracil-DNA glycosylase (UDG) superfamily. UNG family.

The protein resides in the cytoplasm. The catalysed reaction is Hydrolyzes single-stranded DNA or mismatched double-stranded DNA and polynucleotides, releasing free uracil.. Functionally, excises uracil residues from the DNA which can arise as a result of misincorporation of dUMP residues by DNA polymerase or due to deamination of cytosine. The protein is Uracil-DNA glycosylase of Lactobacillus acidophilus (strain ATCC 700396 / NCK56 / N2 / NCFM).